Here is a 504-residue protein sequence, read N- to C-terminus: Maturase K (504 aa).

Belongs to the intron maturase 2 family. MatK subfamily.

The protein localises to the plastid. It is found in the chloroplast. Its function is as follows. Usually encoded in the trnK tRNA gene intron. Probably assists in splicing its own and other chloroplast group II introns. This Gossypium barbadense (Sea Island cotton) protein is Maturase K.